A 458-amino-acid polypeptide reads, in one-letter code: Translation initiation factor eIF2B subunit gamma (458 aa).

Position 291 is a phosphoserine (S291).

Belongs to the eIF-2B gamma/epsilon subunits family. As to quaternary structure, component of the translation initiation factor 2B (eIF2B) complex which is a heterodecamer of two sets of five different subunits: alpha, beta, gamma, delta and epsilon. Subunits alpha, beta and delta comprise a regulatory subcomplex and subunits epsilon and gamma comprise a catalytic subcomplex. Within the complex, the hexameric regulatory complex resides at the center, with the two heterodimeric catalytic subcomplexes bound on opposite sides.

Its subcellular location is the cytoplasm. The protein resides in the cytosol. Functionally, acts as a component of the translation initiation factor 2B (eIF2B) complex, which catalyzes the exchange of GDP for GTP on the eukaryotic initiation factor 2 (eIF2) complex gamma subunit. Its guanine nucleotide exchange factor activity is repressed when bound to eIF2 complex phosphorylated on the alpha subunit, thereby limiting the amount of methionyl-initiator methionine tRNA available to the ribosome and consequently global translation is repressed. The protein is Translation initiation factor eIF2B subunit gamma (tif223) of Schizosaccharomyces pombe (strain 972 / ATCC 24843) (Fission yeast).